Here is a 274-residue protein sequence, read N- to C-terminus: Nitrogenase iron protein (274 aa).

Gly8 to Ser15 is a binding site for ATP. Cys94 contributes to the [4Fe-4S] cluster binding site. Residue Arg97 is modified to ADP-ribosylarginine; by dinitrogenase reductase ADP-ribosyltransferase. [4Fe-4S] cluster is bound at residue Cys131.

The protein belongs to the NifH/BchL/ChlL family. As to quaternary structure, homodimer. The cofactor is [4Fe-4S] cluster. The reversible ADP-ribosylation of Arg-97 inactivates the nitrogenase reductase and regulates nitrogenase activity.

The enzyme catalyses N2 + 8 reduced [2Fe-2S]-[ferredoxin] + 16 ATP + 16 H2O = H2 + 8 oxidized [2Fe-2S]-[ferredoxin] + 2 NH4(+) + 16 ADP + 16 phosphate + 6 H(+). Its function is as follows. The key enzymatic reactions in nitrogen fixation are catalyzed by the nitrogenase complex, which has 2 components: the iron protein and the molybdenum-iron protein. This chain is Nitrogenase iron protein, found in Chlorobium chlorochromatii (strain CaD3).